Consider the following 67-residue polypeptide: MQVLTGLLEQYGYAVLFIVLMLELLALLGPGEFAGVLVFQEKLNWVLSMLAAGLGSCGSEHVVLDRV.

This is an uncharacterized protein from Bacillus subtilis (strain 168).